A 182-amino-acid chain; its full sequence is ATP synthase subunit delta (182 aa).

This sequence belongs to the ATPase delta chain family. As to quaternary structure, F-type ATPases have 2 components, F(1) - the catalytic core - and F(0) - the membrane proton channel. F(1) has five subunits: alpha(3), beta(3), gamma(1), delta(1), epsilon(1). CF(0) has four main subunits: a(1), b(1), b'(1) and c(10-14). The alpha and beta chains form an alternating ring which encloses part of the gamma chain. F(1) is attached to F(0) by a central stalk formed by the gamma and epsilon chains, while a peripheral stalk is formed by the delta, b and b' chains.

Its subcellular location is the cellular thylakoid membrane. In terms of biological role, f(1)F(0) ATP synthase produces ATP from ADP in the presence of a proton or sodium gradient. F-type ATPases consist of two structural domains, F(1) containing the extramembraneous catalytic core and F(0) containing the membrane proton channel, linked together by a central stalk and a peripheral stalk. During catalysis, ATP synthesis in the catalytic domain of F(1) is coupled via a rotary mechanism of the central stalk subunits to proton translocation. Functionally, this protein is part of the stalk that links CF(0) to CF(1). It either transmits conformational changes from CF(0) to CF(1) or is implicated in proton conduction. The polypeptide is ATP synthase subunit delta (Prochlorococcus marinus (strain MIT 9303)).